A 158-amino-acid polypeptide reads, in one-letter code: UPF0262 protein R00612 (158 aa).

It belongs to the UPF0262 family.

In Rhizobium meliloti (strain 1021) (Ensifer meliloti), this protein is UPF0262 protein R00612.